A 351-amino-acid polypeptide reads, in one-letter code: Phosphate acyltransferase (351 aa).

The protein belongs to the PlsX family. As to quaternary structure, homodimer. Probably interacts with PlsY.

It is found in the cytoplasm. It carries out the reaction a fatty acyl-[ACP] + phosphate = an acyl phosphate + holo-[ACP]. Its pathway is lipid metabolism; phospholipid metabolism. Functionally, catalyzes the reversible formation of acyl-phosphate (acyl-PO(4)) from acyl-[acyl-carrier-protein] (acyl-ACP). This enzyme utilizes acyl-ACP as fatty acyl donor, but not acyl-CoA. This is Phosphate acyltransferase from Verminephrobacter eiseniae (strain EF01-2).